An 84-amino-acid chain; its full sequence is Large ribosomal subunit protein bL27 (84 aa).

Residues Met-1–Leu-21 form a disordered region.

The protein belongs to the bacterial ribosomal protein bL27 family.

The polypeptide is Large ribosomal subunit protein bL27 (Pelagibacter ubique (strain HTCC1062)).